The following is a 98-amino-acid chain: NADH-ubiquinone oxidoreductase chain 4L (98 aa).

3 helical membrane-spanning segments follow: residues 1–21 (MLAINLNLTVAFMLALTGVLV), 25–45 (HLMSTLLCLEGMMLSLFILMT), and 57–79 (SMAPLILLVFSACEAGVGLALLV).

This sequence belongs to the complex I subunit 4L family. As to quaternary structure, core subunit of respiratory chain NADH dehydrogenase (Complex I) which is composed of 45 different subunits.

It localises to the mitochondrion inner membrane. The catalysed reaction is a ubiquinone + NADH + 5 H(+)(in) = a ubiquinol + NAD(+) + 4 H(+)(out). Its function is as follows. Core subunit of the mitochondrial membrane respiratory chain NADH dehydrogenase (Complex I) which catalyzes electron transfer from NADH through the respiratory chain, using ubiquinone as an electron acceptor. Part of the enzyme membrane arm which is embedded in the lipid bilayer and involved in proton translocation. The polypeptide is NADH-ubiquinone oxidoreductase chain 4L (MT-ND4L) (Dasyurus hallucatus (Northern quoll)).